Reading from the N-terminus, the 83-residue chain is Small ribosomal subunit protein bS16 (83 aa).

This sequence belongs to the bacterial ribosomal protein bS16 family.

The chain is Small ribosomal subunit protein bS16 from Pseudomonas fluorescens (strain ATCC BAA-477 / NRRL B-23932 / Pf-5).